A 345-amino-acid polypeptide reads, in one-letter code: Phosphoribosylformylglycinamidine cyclo-ligase (345 aa).

Belongs to the AIR synthase family.

It localises to the cytoplasm. The enzyme catalyses 2-formamido-N(1)-(5-O-phospho-beta-D-ribosyl)acetamidine + ATP = 5-amino-1-(5-phospho-beta-D-ribosyl)imidazole + ADP + phosphate + H(+). The protein operates within purine metabolism; IMP biosynthesis via de novo pathway; 5-amino-1-(5-phospho-D-ribosyl)imidazole from N(2)-formyl-N(1)-(5-phospho-D-ribosyl)glycinamide: step 2/2. The protein is Phosphoribosylformylglycinamidine cyclo-ligase of Salmonella typhimurium (strain LT2 / SGSC1412 / ATCC 700720).